Reading from the N-terminus, the 418-residue chain is Queuine tRNA-ribosyltransferase accessory subunit 2 (418 aa).

Residues Cys-325, Cys-327, Cys-330, and His-356 each coordinate Zn(2+).

This sequence belongs to the queuine tRNA-ribosyltransferase family. QTRT2 subfamily. Heterodimer of a catalytic subunit and an accessory subunit. Requires Zn(2+) as cofactor.

It is found in the cytoplasm. Its function is as follows. Non-catalytic subunit of the queuine tRNA-ribosyltransferase (TGT) that catalyzes the base-exchange of a guanine (G) residue with queuine (Q) at position 34 (anticodon wobble position) in tRNAs with GU(N) anticodons (tRNA-Asp, -Asn, -His and -Tyr), resulting in the hypermodified nucleoside queuosine (7-(((4,5-cis-dihydroxy-2-cyclopenten-1-yl)amino)methyl)-7-deazaguanosine). This chain is Queuine tRNA-ribosyltransferase accessory subunit 2, found in Drosophila sechellia (Fruit fly).